We begin with the raw amino-acid sequence, 254 residues long: Flavin-dependent thymidylate synthase (254 aa).

The ThyX domain maps to 7 to 237; it reads LRVQLIARTE…PAVFADFEIY (231 aa). FAD is bound by residues Ser-71, 95 to 97, and Gln-103; that span reads RHR. Residues 92 to 95, 103 to 107, and Arg-176 contribute to the dUMP site; these read ELIR and QLSQR. Positions 95 to 105 match the ThyX motif motif; sequence RHRHFSYSQLS. FAD contacts are provided by residues 192–194 and His-198; that span reads NYR. Residue Arg-203 participates in dUMP binding. Arg-203 acts as the Involved in ionization of N3 of dUMP, leading to its activation in catalysis.

Belongs to the thymidylate synthase ThyX family. Homotetramer. FAD is required as a cofactor.

The enzyme catalyses dUMP + (6R)-5,10-methylene-5,6,7,8-tetrahydrofolate + NADPH + H(+) = dTMP + (6S)-5,6,7,8-tetrahydrofolate + NADP(+). It participates in pyrimidine metabolism; dTTP biosynthesis. Its function is as follows. Catalyzes the reductive methylation of 2'-deoxyuridine-5'-monophosphate (dUMP) to 2'-deoxythymidine-5'-monophosphate (dTMP) while utilizing 5,10-methylenetetrahydrofolate (mTHF) as the methyl donor, and NADPH and FADH(2) as the reductant. The chain is Flavin-dependent thymidylate synthase from Mycobacterium sp. (strain JLS).